We begin with the raw amino-acid sequence, 362 residues long: MEAEDYNASYEDYPDDVDPIVVLEELSPLEGRVVRILLVAVYSVICLLGILGNGLVIVMITCKMKRTVNTVWFLNLAVADFLFNVFLPVHIAYAALDYHWVFGTAMCKISNFLLIHNMFTSVFLLTVISFDRCVSVLLPVWSQNHRSVRLAYTACLVIWVLAFFLSSPSLVFRDTARLHGKISCFNNFSLSAAVSSPWPAHPQVDPVGSGRHKVVTITRFLCGFLVPGLITTACYLTIVYKLQRSRLAKTKKPFKIILTIIVTFFLCWCPYHAFYLLELRRGSVPPSVFSLGVPLATAIAIANSCMNPILYVFMGQDFKKFRVALFSRLVNALSEDTGHSSYPSHRSFTKMSSMNERETGML.

Residues 1-37 (MEAEDYNASYEDYPDDVDPIVVLEELSPLEGRVVRIL) are Extracellular-facing. Asn-7 carries an N-linked (GlcNAc...) asparagine glycan. Residues 38 to 58 (LVAVYSVICLLGILGNGLVIV) form a helical membrane-spanning segment. Topologically, residues 59-70 (MITCKMKRTVNT) are cytoplasmic. The chain crosses the membrane as a helical span at residues 71 to 91 (VWFLNLAVADFLFNVFLPVHI). Residues 92–108 (AYAALDYHWVFGTAMCK) are Extracellular-facing. Cys-107 and Cys-184 are joined by a disulfide. The helical transmembrane segment at 109-129 (ISNFLLIHNMFTSVFLLTVIS) threads the bilayer. The Cytoplasmic segment spans residues 130-151 (FDRCVSVLLPVWSQNHRSVRLA). A helical transmembrane segment spans residues 152-172 (YTACLVIWVLAFFLSSPSLVF). Residues 173–219 (RDTARLHGKISCFNNFSLSAAVSSPWPAHPQVDPVGSGRHKVVTITR) are Extracellular-facing. Asn-187 carries N-linked (GlcNAc...) asparagine glycosylation. The chain crosses the membrane as a helical span at residues 220 to 240 (FLCGFLVPGLITTACYLTIVY). The Cytoplasmic segment spans residues 241–255 (KLQRSRLAKTKKPFK). Residues 256 to 276 (IILTIIVTFFLCWCPYHAFYL) form a helical membrane-spanning segment. Residues 277–281 (LELRR) are Extracellular-facing. The chain crosses the membrane as a helical span at residues 282-302 (GSVPPSVFSLGVPLATAIAIA). The Cytoplasmic segment spans residues 303-362 (NSCMNPILYVFMGQDFKKFRVALFSRLVNALSEDTGHSSYPSHRSFTKMSSMNERETGML). Position 334 is a phosphoserine (Ser-334). The segment at 336-362 (DTGHSSYPSHRSFTKMSSMNERETGML) is disordered. At Thr-337 the chain carries Phosphothreonine. The segment covering 339 to 354 (HSSYPSHRSFTKMSSM) has biased composition (polar residues). Phosphoserine is present on residues Ser-344, Ser-347, and Ser-353.

The protein belongs to the chemokine-like receptor (CMKLR) family. Widely expressed in several tissues including adipose, muscle, liver and brain.

Its subcellular location is the cell membrane. Functionally, receptor for the chemoattractant adipokine chemerin/RARRES2 and for the omega-3 fatty acid derived molecule resolvin E1. Interaction with RARRES2 initiates activation of G proteins G(i)/G(o) and beta-arrestin pathways inducing cellular responses via second messenger pathways such as intracellular calcium mobilization, phosphorylation of MAP kinases MAPK1/MAPK3 (ERK1/2), TYRO3, MAPK14/P38MAPK and PI3K leading to multifunctional effects, like, reduction of immune responses, enhancing of adipogenesis and angionesis. Resolvin E1 down-regulates cytokine production in macrophages by reducing the activation of MAPK1/3 (ERK1/2) and NF-kappa-B. Positively regulates adipogenesis and adipocyte metabolism. The chain is Chemerin-like receptor 1 (CMLKR1) from Bos taurus (Bovine).